The sequence spans 328 residues: ATP-dependent 6-phosphofructokinase (328 aa).

Glycine 11 contacts ATP. ADP is bound at residue 21–25 (RAAVR). ATP contacts are provided by residues 72–73 (RS) and 102–105 (GNGT). Mg(2+) is bound at residue asparagine 103. Residue 126–128 (TID) participates in substrate binding. Aspartate 128 acts as the Proton acceptor in catalysis. Arginine 155 contacts ADP. Residues arginine 163 and 170–172 (MGR) contribute to the substrate site. ADP contacts are provided by residues 186–188 (GAE) and 214–216 (KAS). Substrate-binding positions include glutamate 223, arginine 247, and 253-256 (HVQR).

This sequence belongs to the phosphofructokinase type A (PFKA) family. ATP-dependent PFK group I subfamily. Prokaryotic clade 'B1' sub-subfamily. As to quaternary structure, homotetramer. Requires Mg(2+) as cofactor.

Its subcellular location is the cytoplasm. It carries out the reaction beta-D-fructose 6-phosphate + ATP = beta-D-fructose 1,6-bisphosphate + ADP + H(+). It functions in the pathway carbohydrate degradation; glycolysis; D-glyceraldehyde 3-phosphate and glycerone phosphate from D-glucose: step 3/4. Allosterically activated by ADP and other diphosphonucleosides, and allosterically inhibited by phosphoenolpyruvate. Catalyzes the phosphorylation of D-fructose 6-phosphate to fructose 1,6-bisphosphate by ATP, the first committing step of glycolysis. This chain is ATP-dependent 6-phosphofructokinase, found in Cytophaga hutchinsonii (strain ATCC 33406 / DSM 1761 / CIP 103989 / NBRC 15051 / NCIMB 9469 / D465).